The chain runs to 300 residues: Glycine--tRNA ligase alpha subunit (300 aa).

It belongs to the class-II aminoacyl-tRNA synthetase family. As to quaternary structure, tetramer of two alpha and two beta subunits.

The protein localises to the cytoplasm. The enzyme catalyses tRNA(Gly) + glycine + ATP = glycyl-tRNA(Gly) + AMP + diphosphate. The chain is Glycine--tRNA ligase alpha subunit from Pseudoalteromonas translucida (strain TAC 125).